A 512-amino-acid polypeptide reads, in one-letter code: Maturase K (512 aa).

Belongs to the intron maturase 2 family. MatK subfamily.

The protein localises to the plastid. It is found in the chloroplast. Functionally, usually encoded in the trnK tRNA gene intron. Probably assists in splicing its own and other chloroplast group II introns. This is Maturase K from Lilium henryi (Henry's lily).